A 374-amino-acid polypeptide reads, in one-letter code: uncharacterized protein (374 aa).

This sequence belongs to the mimivirus R640 family.

It is found in the virion. This is an uncharacterized protein from Acanthamoeba polyphaga (Amoeba).